A 475-amino-acid polypeptide reads, in one-letter code: ATP synthase subunit beta, chloroplastic (475 aa).

Residue Gly155–Thr162 coordinates ATP.

This sequence belongs to the ATPase alpha/beta chains family. F-type ATPases have 2 components, CF(1) - the catalytic core - and CF(0) - the membrane proton channel. CF(1) has five subunits: alpha(3), beta(3), gamma(1), delta(1), epsilon(1). CF(0) has four main subunits: a(1), b(1), b'(1) and c(9-12).

It is found in the plastid. It localises to the chloroplast thylakoid membrane. The catalysed reaction is ATP + H2O + 4 H(+)(in) = ADP + phosphate + 5 H(+)(out). In terms of biological role, produces ATP from ADP in the presence of a proton gradient across the membrane. The catalytic sites are hosted primarily by the beta subunits. The polypeptide is ATP synthase subunit beta, chloroplastic (Guillardia theta (Cryptophyte)).